The primary structure comprises 486 residues: Solute carrier family 2, facilitated glucose transporter member 5 (486 aa).

N-acetylmethionine is present on Met1. Residues 1–19 are Cytoplasmic-facing; that stretch reads MEQEGQEKKKEGRLTLVLA. The chain crosses the membrane as a helical span at residues 20–40; the sequence is LRTLIAAFGSSFQYAYNVSVC. Residue Tyr33 participates in D-fructose binding. The Extracellular portion of the chain corresponds to 41–69; that stretch reads NSPSELMTEFYNDTYYDRTGELIDEFPLT. N-linked (GlcNAc...) asparagine glycosylation occurs at Asn52. The helical transmembrane segment at 70–92 threads the bilayer; it reads LLWSVTVSMFPSGGFAGSLLVGP. Topologically, residues 93-99 are cytoplasmic; sequence LVNKFGR. The chain crosses the membrane as a helical span at residues 100–120; it reads KGALLFNNIFSIVPAILMGCS. At 121-127 the chain is on the extracellular side; it reads KVARSFE. A helical membrane pass occupies residues 128 to 150; sequence LIIISRLLVGICAGVSSNVVPMY. The Cytoplasmic portion of the chain corresponds to 151–162; the sequence is LGELAPKNLRGA. Residues 163–183 form a helical membrane-spanning segment; it reads LGVESQLFITLGILVAQIFGL. Gln168 lines the D-fructose pocket. Topologically, residues 184-192 are extracellular; that stretch reads RSIRQQKGW. The helical transmembrane segment at 193–211 threads the bilayer; sequence PILLGLTGGPAAAACPPFF. The Cytoplasmic portion of the chain corresponds to 212-274; the sequence is PESPRYLLIG…LCAMRGLAWQ (63 aa). A helical membrane pass occupies residues 275-294; the sequence is LISVVPLMWQQLSGVNAIYY. D-fructose-binding positions include Gln284 and 292–294; that span reads IYY. Topologically, residues 295-306 are extracellular; sequence YDQIYLSPLDTD. The helical transmembrane segment at 307 to 327 threads the bilayer; that stretch reads TQYYTAATGAVNVLMTVCTVF. The Cytoplasmic portion of the chain corresponds to 328–334; sequence VVESWAR. A helical membrane pass occupies residues 335 to 355; the sequence is LLLLLGFSPLAPTCCVLTAAL. The Extracellular portion of the chain corresponds to 356–363; that stretch reads ALQDTVSW. A helical transmembrane segment spans residues 364 to 385; the sequence is MPYISIVCIIVYVIGHAIGPAI. A D-fructose-binding site is contributed by His379. At 386 to 402 the chain is on the cytoplasmic side; the sequence is RSLYTEIFLQSGRPPTW. Residues 403–421 traverse the membrane as a helical segment; it reads WGQVHWLSNFTVGLVFPLI. 407 to 408 lines the D-fructose pocket; that stretch reads HW. Residues 422–426 are Extracellular-facing; that stretch reads QWAGL. The chain crosses the membrane as a helical span at residues 427-447; that stretch reads YSFIIFGVACLSTTVYTFLIV. The Cytoplasmic portion of the chain corresponds to 448–486; sequence PETKGKSFIEIIRRFIRMNKVEVSPDREELKDFPPDVSE.

It belongs to the major facilitator superfamily. Sugar transporter (TC 2.A.1.1) family. Glucose transporter subfamily. Detected in jejunum. Detected at the intestinal brush-border membrane (at protein level). Detected in duodenum, jejunum and kidney.

It is found in the apical cell membrane. The protein resides in the cell membrane. The protein localises to the sarcolemma. The enzyme catalyses D-fructose(out) = D-fructose(in). In terms of biological role, functions as a fructose transporter that has only low activity with other monosaccharides. Can mediate the uptake of deoxyglucose, but with low efficiency. Essential for fructose uptake in the small intestine. Plays a role in the regulation of salt uptake and blood pressure in response to dietary fructose. Required for the development of high blood pressure in response to high dietary fructose intake. This is Solute carrier family 2, facilitated glucose transporter member 5 from Oryctolagus cuniculus (Rabbit).